The primary structure comprises 125 residues: Small ribosomal subunit protein uS13 (125 aa).

The disordered stretch occupies residues 92-125 (RRSLPVRGQNTQTNARTRKGKRKTVAGKKKAARK). The segment covering 107–125 (RTRKGKRKTVAGKKKAARK) has biased composition (basic residues).

Belongs to the universal ribosomal protein uS13 family. As to quaternary structure, part of the 30S ribosomal subunit. Forms a loose heterodimer with protein S19. Forms two bridges to the 50S subunit in the 70S ribosome.

Functionally, located at the top of the head of the 30S subunit, it contacts several helices of the 16S rRNA. In the 70S ribosome it contacts the 23S rRNA (bridge B1a) and protein L5 of the 50S subunit (bridge B1b), connecting the 2 subunits; these bridges are implicated in subunit movement. Contacts the tRNAs in the A and P-sites. The sequence is that of Small ribosomal subunit protein uS13 from Chlorobium luteolum (strain DSM 273 / BCRC 81028 / 2530) (Pelodictyon luteolum).